A 264-amino-acid chain; its full sequence is 3-methyl-2-oxobutanoate hydroxymethyltransferase (264 aa).

The Mg(2+) site is built by Asp-45 and Asp-84. Residues 45-46 (DS), Asp-84, and Lys-112 each bind 3-methyl-2-oxobutanoate. Glu-114 lines the Mg(2+) pocket. The Proton acceptor role is filled by Glu-181.

It belongs to the PanB family. As to quaternary structure, homodecamer; pentamer of dimers. Mg(2+) serves as cofactor.

It localises to the cytoplasm. It carries out the reaction 3-methyl-2-oxobutanoate + (6R)-5,10-methylene-5,6,7,8-tetrahydrofolate + H2O = 2-dehydropantoate + (6S)-5,6,7,8-tetrahydrofolate. It participates in cofactor biosynthesis; (R)-pantothenate biosynthesis; (R)-pantoate from 3-methyl-2-oxobutanoate: step 1/2. Its function is as follows. Catalyzes the reversible reaction in which hydroxymethyl group from 5,10-methylenetetrahydrofolate is transferred onto alpha-ketoisovalerate to form ketopantoate. This is 3-methyl-2-oxobutanoate hydroxymethyltransferase from Escherichia coli O157:H7.